Consider the following 227-residue polypeptide: Cytochrome c oxidase subunit 2 (227 aa).

At 1 to 14 (MAYPFQLGLQDATS) the chain is on the mitochondrial intermembrane side. The helical transmembrane segment at 15–45 (PIMEELTNFHDHTLMIVFLISSLVLYIISLM) threads the bilayer. The Mitochondrial matrix portion of the chain corresponds to 46 to 59 (LTTKLTHTSTMDAQ). A helical membrane pass occupies residues 60–87 (EVETIWTILPAAILVLIALPSLRILYMM). The Mitochondrial intermembrane segment spans residues 88–227 (DEINNPVLTV…HFENWSASMV (140 aa)). Residues His161, Cys196, Glu198, Cys200, His204, and Met207 each contribute to the Cu cation site. Glu198 is a binding site for Mg(2+).

Belongs to the cytochrome c oxidase subunit 2 family. In terms of assembly, component of the cytochrome c oxidase (complex IV, CIV), a multisubunit enzyme composed of 14 subunits. The complex is composed of a catalytic core of 3 subunits MT-CO1, MT-CO2 and MT-CO3, encoded in the mitochondrial DNA, and 11 supernumerary subunits COX4I, COX5A, COX5B, COX6A, COX6B, COX6C, COX7A, COX7B, COX7C, COX8 and NDUFA4, which are encoded in the nuclear genome. The complex exists as a monomer or a dimer and forms supercomplexes (SCs) in the inner mitochondrial membrane with NADH-ubiquinone oxidoreductase (complex I, CI) and ubiquinol-cytochrome c oxidoreductase (cytochrome b-c1 complex, complex III, CIII), resulting in different assemblies (supercomplex SCI(1)III(2)IV(1) and megacomplex MCI(2)III(2)IV(2)). Found in a complex with TMEM177, COA6, COX18, COX20, SCO1 and SCO2. Interacts with TMEM177 in a COX20-dependent manner. Interacts with COX20. Interacts with COX16. The cofactor is Cu cation.

The protein resides in the mitochondrion inner membrane. The catalysed reaction is 4 Fe(II)-[cytochrome c] + O2 + 8 H(+)(in) = 4 Fe(III)-[cytochrome c] + 2 H2O + 4 H(+)(out). Its function is as follows. Component of the cytochrome c oxidase, the last enzyme in the mitochondrial electron transport chain which drives oxidative phosphorylation. The respiratory chain contains 3 multisubunit complexes succinate dehydrogenase (complex II, CII), ubiquinol-cytochrome c oxidoreductase (cytochrome b-c1 complex, complex III, CIII) and cytochrome c oxidase (complex IV, CIV), that cooperate to transfer electrons derived from NADH and succinate to molecular oxygen, creating an electrochemical gradient over the inner membrane that drives transmembrane transport and the ATP synthase. Cytochrome c oxidase is the component of the respiratory chain that catalyzes the reduction of oxygen to water. Electrons originating from reduced cytochrome c in the intermembrane space (IMS) are transferred via the dinuclear copper A center (CU(A)) of subunit 2 and heme A of subunit 1 to the active site in subunit 1, a binuclear center (BNC) formed by heme A3 and copper B (CU(B)). The BNC reduces molecular oxygen to 2 water molecules using 4 electrons from cytochrome c in the IMS and 4 protons from the mitochondrial matrix. In Uromys caudimaculatus (Giant white-tailed rat), this protein is Cytochrome c oxidase subunit 2 (MT-CO2).